We begin with the raw amino-acid sequence, 472 residues long: MSNMEHDRWSRVKGRLRSSVGEDVYSSWFARMDLEAVQQESVHLSVPTRFLKSWIQTHYSEKVLTCWQAEMPEVCRIDLTVRSPMRAAVTKEAPAPAEHRRDEHRPAADARSHAAAPAPSNHDALGGSPLDPRLTFASFVVGRSNTLAHAAAKQVAEGRRGDPVMFNPLYIHSGVGLGKTHLLQAVTWAGNSGTERKVLYLTAEKFMYGFVASLKTQTSLAFKEALRGIDVLVIDDLQFLQGKTTQAEFCHTLNALIDAGRQVVVAADRPPADLESLDERVRSRLAGGLVVEMAPLGEELRLGILKSRVVAARTHHASFDVPQSVLEYLARAITHNGRDLEGAINRLLAHSKLNAQPVTLEMAEHEVRDLIRPQEPKRIKIEDIQRVVARQYNVSRSDLLSSRRTANVVRPRQVAMYLAKTLTLRSLPEIGRRFGGRDHTTVLHAVRKIEGLVSKDVTLSDEVESLKRQLQE.

The domain I, interacts with DnaA modulators stretch occupies residues 1–73 (MSNMEHDRWS…LTCWQAEMPE (73 aa)). The tract at residues 73-128 (EVCRIDLTVRSPMRAAVTKEAPAPAEHRRDEHRPAADARSHAAAPAPSNHDALGGS) is domain II. The tract at residues 89–127 (VTKEAPAPAEHRRDEHRPAADARSHAAAPAPSNHDALGG) is disordered. Residues 97–112 (AEHRRDEHRPAADARS) are compositionally biased toward basic and acidic residues. Low complexity predominate over residues 113-124 (HAAAPAPSNHDA). The domain III, AAA+ region stretch occupies residues 129 to 351 (PLDPRLTFAS…GAINRLLAHS (223 aa)). Positions 176, 178, 179, and 180 each coordinate ATP. Positions 352–472 (KLNAQPVTLE…VESLKRQLQE (121 aa)) are domain IV, binds dsDNA.

Belongs to the DnaA family. In terms of assembly, oligomerizes as a right-handed, spiral filament on DNA at oriC.

It is found in the cytoplasm. Plays an essential role in the initiation and regulation of chromosomal replication. ATP-DnaA binds to the origin of replication (oriC) to initiate formation of the DNA replication initiation complex once per cell cycle. Binds the DnaA box (a 9 base pair repeat at the origin) and separates the double-stranded (ds)DNA. Forms a right-handed helical filament on oriC DNA; dsDNA binds to the exterior of the filament while single-stranded (ss)DNA is stabiized in the filament's interior. The ATP-DnaA-oriC complex binds and stabilizes one strand of the AT-rich DNA unwinding element (DUE), permitting loading of DNA polymerase. After initiation quickly degrades to an ADP-DnaA complex that is not apt for DNA replication. Binds acidic phospholipids. The protein is Chromosomal replication initiator protein DnaA of Rhodopseudomonas palustris (strain BisB5).